A 462-amino-acid polypeptide reads, in one-letter code: Cytochrome c biogenesis protein CcsB (462 aa).

3 helical membrane passes run 30-50 (LRVA…GTVI), 89-109 (TWWY…CTFR), and 175-195 (IGPI…IWGA).

Belongs to the Ccs1/CcsB family. In terms of assembly, may interact with CcsA.

The protein resides in the cellular thylakoid membrane. Functionally, required during biogenesis of c-type cytochromes (cytochrome c6 and cytochrome f) at the step of heme attachment. This Picosynechococcus sp. (strain ATCC 27264 / PCC 7002 / PR-6) (Agmenellum quadruplicatum) protein is Cytochrome c biogenesis protein CcsB.